We begin with the raw amino-acid sequence, 533 residues long: Nitrogen fixation protein AnfA (533 aa).

The tract at residues 33-193 is a domain; that stretch reads ILYKISQIIT…PLVELYLIEN (161 aa). Positions 46-186 constitute a GAF domain; the sequence is DLADALSIVL…MIATMIAPLV (141 aa). The 230-residue stretch at 219–448 folds into the Sigma-54 factor interaction domain; the sequence is IIGNSKPMQE…LENVMERAVI (230 aa). ATP is bound by residues 247–254 and 310–319; these read GESGVGKE and ADGGTIFLDE. Residues 501–520 constitute a DNA-binding region (H-T-H motif); that stretch reads IGEAAKELGLARRMLGVRME.

Its function is as follows. AnfA is essential for nitrogen fixation under Mo- and V-deficient conditions. It is required for the regulation of nitrogenase 3 transcription. Interacts with sigma-54. This chain is Nitrogen fixation protein AnfA (anfA), found in Azotobacter vinelandii.